A 121-amino-acid polypeptide reads, in one-letter code: Protein YxiB (121 aa).

The protein is Protein YxiB (yxiB) of Bacillus subtilis (strain 168).